Consider the following 512-residue polypeptide: Kynurenine 3-monooxygenase (512 aa).

Belongs to the aromatic-ring hydroxylase family. KMO subfamily. It depends on FAD as a cofactor.

Its subcellular location is the mitochondrion outer membrane. The catalysed reaction is L-kynurenine + NADPH + O2 + H(+) = 3-hydroxy-L-kynurenine + NADP(+) + H2O. Its pathway is cofactor biosynthesis; NAD(+) biosynthesis; quinolinate from L-kynurenine: step 1/3. Catalyzes the hydroxylation of L-kynurenine (L-Kyn) to form 3-hydroxy-L-kynurenine (L-3OHKyn). Required for synthesis of quinolinic acid. This Neosartorya fischeri (strain ATCC 1020 / DSM 3700 / CBS 544.65 / FGSC A1164 / JCM 1740 / NRRL 181 / WB 181) (Aspergillus fischerianus) protein is Kynurenine 3-monooxygenase (bna4).